A 130-amino-acid chain; its full sequence is Small ribosomal subunit protein uS9 (130 aa).

The protein belongs to the universal ribosomal protein uS9 family.

This Agathobacter rectalis (strain ATCC 33656 / DSM 3377 / JCM 17463 / KCTC 5835 / VPI 0990) (Eubacterium rectale) protein is Small ribosomal subunit protein uS9.